Consider the following 517-residue polypeptide: MAVSRRRVPQAGARSFFCALLLSFSQFTGSDGTGGDAAAPGAAGTQAELPHRRFEYKYSFKGPHLVQSDGTVPFWAHAGNAIPSADQIRIAPSLKSQRGSVWTKAKAAFENWEVEVTFRVTGRGRIGADGLAIWYTENQGLDGPVFGSADTWNGVGIFFDSFDNDGKKNNPAIVVIGNNGQINYDHQNDGATQALASCQRDFRNKPYPVRAKITYYQKTLTVMINNGFTPDKNDYEFCAKVENMVIPTQGHFGISAATGGLADDHDVLSFLTFQLTEPGKEPPTAEKDISEKEKEKYQEEFEHFQQELDKKKEEFQKGHPDLQGQPADDIFESIGDRELRQVFEGQNRIHLEIKQLNRQLDMILDEQRRYVSSLTEEISRRGAGTPGQPGQVSQQELDTVVKSQQEILRQVNEVKNSMSETVRLVSGIQHPGSAGVYETTQHFMDIKEHLHVVKRDIDSLAQRSMPSNEKPKCPDLPPFPSCLSTIHFVIFVVVQTVLFVGYIMYRTQQEAAAKKFF.

Residues 1 to 30 (MAVSRRRVPQAGARSFFCALLLSFSQFTGS) form the signal peptide. At 31–484 (DGTGGDAAAP…DLPPFPSCLS (454 aa)) the chain is on the lumenal side. The 224-residue stretch at 52–275 (RRFEYKYSFK…DVLSFLTFQL (224 aa)) folds into the L-type lectin-like domain. A carbohydrate-binding residues include Ser-96 and Asp-129. Residues Asp-160, Phe-162, and Asn-164 each coordinate Ca(2+). A carbohydrate contacts are provided by Asn-164 and His-186. Ca(2+) is bound at residue Asp-189. Residues Cys-198 and Cys-238 are joined by a disulfide bond. Residue 259–261 (GGL) participates in a carbohydrate binding. At Ser-433 the chain carries Phosphoserine. The helical transmembrane segment at 485–505 (TIHFVIFVVVQTVLFVGYIMY) threads the bilayer. Residues 506-517 (RTQQEAAAKKFF) lie on the Cytoplasmic side of the membrane. Residues 506-517 (RTQQEAAAKKFF) are mediates interaction with RAB3GAP1, RAB3GAP2 and UBXN6. Positions 516-517 (FF) match the ER export motif motif.

As to quaternary structure, exists both as a covalent disulfide-linked homohexamer, and a complex of three disulfide-linked dimers non-covalently kept together. Interacts with MCFD2. May interact with TMEM115. Interacts with RAB3GAP1 and RAB3GAP2. Interacts with UBXN6. Interacts with SERPINA1/alpha1-antitrypsin. Interacts with BET1.

It localises to the endoplasmic reticulum-Golgi intermediate compartment membrane. The protein localises to the golgi apparatus membrane. The protein resides in the endoplasmic reticulum membrane. In terms of biological role, mannose-specific lectin. May recognize sugar residues of glycoproteins, glycolipids, or glycosylphosphatidyl inositol anchors and may be involved in the sorting or recycling of proteins, lipids, or both. The LMAN1-MCFD2 complex forms a specific cargo receptor for the ER-to-Golgi transport of selected proteins. The polypeptide is Protein ERGIC-53 (Lman1) (Mus musculus (Mouse)).